We begin with the raw amino-acid sequence, 224 residues long: Glutathione S-transferase U28 (224 aa).

A GST N-terminal domain is found at 6–85 (SKVVVLDFWA…YIDETWTDAA (80 aa)). Glutathione is bound by residues 16–17 (SP), 42–43 (NK), 56–57 (KV), and 69–70 (ES). Positions 91–217 (DPQSRATARF…EKVYQQVLKL (127 aa)) constitute a GST C-terminal domain. A Phosphothreonine modification is found at threonine 154.

Belongs to the GST superfamily. Tau family.

It is found in the cytoplasm. Its subcellular location is the cytosol. The enzyme catalyses RX + glutathione = an S-substituted glutathione + a halide anion + H(+). May be involved in the conjugation of reduced glutathione to a wide number of exogenous and endogenous hydrophobic electrophiles and have a detoxification role against certain herbicides. The protein is Glutathione S-transferase U28 (GSTU28) of Arabidopsis thaliana (Mouse-ear cress).